A 209-amino-acid chain; its full sequence is Uracil phosphoribosyltransferase (209 aa).

Residues arginine 79, arginine 104, and 131–139 (DPMLATGGS) contribute to the 5-phospho-alpha-D-ribose 1-diphosphate site. Residues isoleucine 194 and 199–201 (GDA) contribute to the uracil site. A 5-phospho-alpha-D-ribose 1-diphosphate-binding site is contributed by aspartate 200.

It belongs to the UPRTase family. It depends on Mg(2+) as a cofactor.

It carries out the reaction UMP + diphosphate = 5-phospho-alpha-D-ribose 1-diphosphate + uracil. It functions in the pathway pyrimidine metabolism; UMP biosynthesis via salvage pathway; UMP from uracil: step 1/1. With respect to regulation, allosterically activated by GTP. In terms of biological role, catalyzes the conversion of uracil and 5-phospho-alpha-D-ribose 1-diphosphate (PRPP) to UMP and diphosphate. This chain is Uracil phosphoribosyltransferase, found in Geobacter sulfurreducens (strain ATCC 51573 / DSM 12127 / PCA).